Consider the following 647-residue polypeptide: Putative lipase YDL109C (647 aa).

S274 functions as the Charge relay system in the catalytic mechanism. A disordered region spans residues 502–523; the sequence is PPPSPTLYEGTAAKEGETRKTR. Over residues 513-523 the composition is skewed to basic and acidic residues; the sequence is AAKEGETRKTR.

Belongs to the putative lipase ROG1 family.

Involved in lipid metabolism. This chain is Putative lipase YDL109C, found in Saccharomyces cerevisiae (strain ATCC 204508 / S288c) (Baker's yeast).